The following is a 557-amino-acid chain: Ras-specific guanine nucleotide-releasing factor RalGPS2 (557 aa).

A Ras-GEF domain is found at 49 to 287 (TPEEYAGQIT…YKLSLKIEPG (239 aa)). Positions 283-314 (KIEPGTSTPRSAASREDLVGPEVGASPQSGRK) are disordered. Residues serine 293, serine 296, serine 308, and serine 311 each carry the phosphoserine modification. A Phosphothreonine modification is found at threonine 326. A PXXP motif is present at residues 327–330 (PPSP). Phosphoserine occurs at positions 329 and 343. Threonine 361 is subject to Phosphothreonine. Positions 368–409 (RHLLDDSVMEPHAPSRGQAESSTLSSGISIGSSDGSELSEET) are disordered. Position 374 is a phosphoserine (serine 374). Over residues 387–403 (ESSTLSSGISIGSSDGS) the composition is skewed to low complexity. A PH domain is found at 431 to 543 (AVTIQGVLRR…WFKHLSAACQ (113 aa)). A required for stimulation of nucleotide exchange by RALA region spans residues 433–557 (TIQGVLRRKT…QVPTNLMTFE (125 aa)).

As to quaternary structure, interacts with the SH3 domains of GRB2 and PLCG1. Interacts with RALA.

It localises to the cytoplasm. The protein localises to the cell membrane. Functionally, guanine nucleotide exchange factor for the small GTPase RALA. May be involved in cytoskeletal organization. May also be involved in the stimulation of transcription in a Ras-independent fashion. In Macaca fascicularis (Crab-eating macaque), this protein is Ras-specific guanine nucleotide-releasing factor RalGPS2 (RALGPS2).